Here is a 249-residue protein sequence, read N- to C-terminus: MAQFYPGSTKIAENRRKFMNPDAELEKLREISDEDVVRILGHRAPGEEYPSVHPPLEELDEPEDPIKDIVEPTEGAKAGDRVRYVQFTDSVYFAPAQPYIRSRAYLWRYRGADAGTLSGRQIIEARERDVEKIAKELIETEFFDPARTGIRGKSVHGHSLRLDENGMMFDMLRRQVYDEETGRVKMVKNQIGDEFDEPIDLGEPLDEETLKEKTTIYRIDNIPYREDKDLLEIVQRIHQLRSEAGFSPE.

The segment at 43 to 62 is disordered; it reads RAPGEEYPSVHPPLEELDEP. Position 120 (Arg120) interacts with coenzyme M.

Belongs to the methyl-coenzyme M reductase gamma subunit family. In terms of assembly, MCR is a hexamer of two alpha, two beta, and two gamma chains, forming a dimer of heterotrimers. Coenzyme F430 is required as a cofactor.

The protein resides in the cytoplasm. The enzyme catalyses coenzyme B + methyl-coenzyme M = methane + coenzyme M-coenzyme B heterodisulfide. It functions in the pathway one-carbon metabolism; methyl-coenzyme M reduction; methane from methyl-coenzyme M: step 1/1. Component of the methyl-coenzyme M reductase (MCR) I that catalyzes the reductive cleavage of methyl-coenzyme M (CoM-S-CH3 or 2-(methylthio)ethanesulfonate) using coenzyme B (CoB or 7-mercaptoheptanoylthreonine phosphate) as reductant which results in the production of methane and the mixed heterodisulfide of CoB and CoM (CoM-S-S-CoB). This is the final step in methanogenesis. In Methanothermus fervidus, this protein is Methyl-coenzyme M reductase subunit gamma (mcrG).